The sequence spans 230 residues: Ion-translocating oxidoreductase complex subunit E (230 aa).

The next 6 helical transmembrane spans lie at 11–31, 39–59, 69–89, 93–113, 132–152, and 182–202; these read GMWA…LLAV, LGLG…VSLV, IPVF…LMNA, GLYL…IIIG, FWMG…REII, and SFLL…LIAL.

The protein belongs to the NqrDE/RnfAE family. As to quaternary structure, the complex is composed of six subunits: RnfA, RnfB, RnfC, RnfD, RnfE and RnfG.

The protein localises to the cell inner membrane. Its function is as follows. Part of a membrane-bound complex that couples electron transfer with translocation of ions across the membrane. This is Ion-translocating oxidoreductase complex subunit E from Vibrio atlanticus (strain LGP32) (Vibrio splendidus (strain Mel32)).